Here is a 363-residue protein sequence, read N- to C-terminus: Branched-chain-amino-acid aminotransferase 2 (363 aa).

Residue lysine 197 is modified to N6-(pyridoxal phosphate)lysine.

The protein belongs to the class-IV pyridoxal-phosphate-dependent aminotransferase family. The cofactor is pyridoxal 5'-phosphate.

The enzyme catalyses L-leucine + 2-oxoglutarate = 4-methyl-2-oxopentanoate + L-glutamate. The catalysed reaction is L-isoleucine + 2-oxoglutarate = (S)-3-methyl-2-oxopentanoate + L-glutamate. It carries out the reaction L-valine + 2-oxoglutarate = 3-methyl-2-oxobutanoate + L-glutamate. Its pathway is amino-acid biosynthesis; L-isoleucine biosynthesis; L-isoleucine from 2-oxobutanoate: step 4/4. The protein operates within amino-acid biosynthesis; L-leucine biosynthesis; L-leucine from 3-methyl-2-oxobutanoate: step 4/4. It participates in amino-acid biosynthesis; L-valine biosynthesis; L-valine from pyruvate: step 4/4. With respect to regulation, inhibited by canaline. Its function is as follows. Transaminates branched-chain amino acids and ketoglutarate. In Bacillus subtilis (strain 168), this protein is Branched-chain-amino-acid aminotransferase 2 (ilvK).